Consider the following 1120-residue polypeptide: Transcription-repair-coupling factor (1120 aa).

A Helicase ATP-binding domain is found at 591 to 756 (DLTNGMLMDR…MTGLKELSII (166 aa)). 604 to 611 (GDVGFGKT) is a binding site for ATP. A DEEQ box motif is present at residues 709 to 712 (DEEQ). Positions 777–933 (IIRDALLREH…TIASHDADLR (157 aa)) constitute a Helicase C-terminal domain.

The protein in the N-terminal section; belongs to the UvrB family. It in the C-terminal section; belongs to the helicase family. RecG subfamily.

Its subcellular location is the cytoplasm. Couples transcription and DNA repair by recognizing RNA polymerase (RNAP) stalled at DNA lesions. Mediates ATP-dependent release of RNAP and its truncated transcript from the DNA, and recruitment of nucleotide excision repair machinery to the damaged site. In Rickettsia prowazekii (strain Madrid E), this protein is Transcription-repair-coupling factor.